A 360-amino-acid chain; its full sequence is DNA replication and repair protein RecF (360 aa).

30–37 is an ATP binding site; that stretch reads GANGSGKT.

It belongs to the RecF family.

It is found in the cytoplasm. Functionally, the RecF protein is involved in DNA metabolism; it is required for DNA replication and normal SOS inducibility. RecF binds preferentially to single-stranded, linear DNA. It also seems to bind ATP. In Acinetobacter baumannii (strain SDF), this protein is DNA replication and repair protein RecF.